Reading from the N-terminus, the 469-residue chain is Dynein axonemal assembly factor 11 (469 aa).

4 LRR repeats span residues 20–43 (IFSL…DKWC), 44–65 (RELK…VSKL), 66–89 (KKLE…GCES), and 90–110 (LQKL…NSLQ). One can recognise an LRRCT domain in the interval 114–135 (HLRELYLVGNPCAEYEGYRQYV). Composition is skewed to basic and acidic residues over residues 179 to 213 (KRAA…RRWY) and 261 to 286 (SRLE…ELKK). Disordered stretches follow at residues 179–290 (KRAA…KPPR) and 436–469 (KTQA…PPLM).

It belongs to the tilB family.

It is found in the cytoplasm. Its subcellular location is the cell projection. The protein localises to the cilium. It localises to the dynein axonemal particle. The protein resides in the flagellum. Involved in dynein arm assembly, is important for expression and transporting outer dynein arm (ODA) proteins from the cytoplasm to the cilia. This Xenopus laevis (African clawed frog) protein is Dynein axonemal assembly factor 11 (dnaaf11).